The sequence spans 268 residues: Putative ABC transporter ATP-binding protein MK0182 (268 aa).

An ABC transporter domain is found at 1–229 (MTHEYPDGTC…VDLIRESGLK (229 aa)). 29 to 36 (GPNGSGKT) serves as a coordination point for ATP.

Belongs to the ABC transporter superfamily.

Its subcellular location is the cell membrane. Functionally, probably part of an ABC transporter complex. Responsible for energy coupling to the transport system. This chain is Putative ABC transporter ATP-binding protein MK0182, found in Methanopyrus kandleri (strain AV19 / DSM 6324 / JCM 9639 / NBRC 100938).